Reading from the N-terminus, the 240-residue chain is Lactate utilization protein C (240 aa).

It belongs to the LutC/YkgG family.

Its function is as follows. Is involved in L-lactate degradation and allows cells to grow with lactate as the sole carbon source. In Geobacillus thermodenitrificans (strain NG80-2), this protein is Lactate utilization protein C.